The primary structure comprises 568 residues: Protein AF-9 (568 aa).

The YEATS domain maps to 1–138 (MASSCAVQVK…EDFRRKLLKA (138 aa)). Histone H3K9cr binding stretches follow at residues 78-80 (YAG) and 106-108 (LHL). A disordered region spans residues 138–475 (AGGDPNRSIH…PPPPLLKTNN (338 aa)). The span at 149-190 (SSSSSSSSSSSSSSSSSSSSSSSSSSSSSSSSSSSSSSSSSS) shows a compositional bias: low complexity. Positions 202–265 (EHKEKPSKDS…PKPMSKEPKP (64 aa)) are enriched in basic and acidic residues. A phosphoserine mark is found at serine 288 and serine 294. A Nuclear localization signal motif is present at residues 295-300 (AKKRKK). The span at 303–313 (SEALFKSFSSA) shows a compositional bias: low complexity. Residues 322–349 (ADKKQIKDKSHVKMGKVKIESETSEKKK) are compositionally biased toward basic and acidic residues. Lysine 339 participates in a covalent cross-link: Glycyl lysine isopeptide (Lys-Gly) (interchain with G-Cter in SUMO2). Residues 357–368 (DIVDPNDSDVEE) are compositionally biased toward acidic residues. A compositionally biased stretch (low complexity) spans 371-395 (SSKSDSEQPSPASSSSSSSSSFTPS). Phosphoserine is present on residues serine 412 and serine 419. Residues 414 to 429 (DNEEESDEVEDNDNDS) show a composition bias toward acidic residues. Positions 445 to 461 (VSLSDGSDSESSSASSP) are enriched in low complexity. Serine 483 is modified (phosphoserine).

As to quaternary structure, component of the super elongation complex (SEC), at least composed of EAF1, EAF2, CDK9, MLLT3/AF9, AFF (AFF1 or AFF4), the P-TEFb complex and ELL (ELL, ELL2 or ELL3). Interacts with BCOR. Interacts with CBX8. Interacts with ALKBH4. As to expression, enriched in undifferentiated hematopoietic stem cells in fetal liver, cord blood and bone marrow.

It is found in the nucleus. It localises to the chromosome. With respect to regulation, crotonylated lysine binding is strongly inhibited by the peptide XL-07i, carrying a 2-furancarbonyl side chain and capped with a hydrophobic carboxybenzyl group. XL-07i targets the unique pi-pi-pi stacking interaction at the crotonylation recognition site. Functionally, chromatin reader component of the super elongation complex (SEC), a complex required to increase the catalytic rate of RNA polymerase II transcription by suppressing transient pausing by the polymerase at multiple sites along the DNA. Specifically recognizes and binds acylated histone H3, with a preference for histone H3 that is crotonylated. Crotonylation marks active promoters and enhancers and confers resistance to transcriptional repressors. Recognizes and binds histone H3 crotonylated at 'Lys-9' (H3K9cr), and with slightly lower affinity histone H3 crotonylated at 'Lys-18' (H3K18cr). Also recognizes and binds histone H3 acetylated and butyrylated at 'Lys-9' (H3K9ac and H3K9bu, respectively), but with lower affinity than crotonylated histone H3. In the SEC complex, MLLT3 is required to recruit the complex to crotonylated histones. Recruitment of the SEC complex to crotonylated histones promotes recruitment of DOT1L on active chromatin to deposit histone H3 'Lys-79' methylation (H3K79me). Plays a key role in hematopoietic stem cell (HSC) maintenance by preserving, rather than conferring, HSC stemness. Acts by binding to the transcription start site of active genes in HSCs and sustaining level of H3K79me2, probably by recruiting DOT1L. In Homo sapiens (Human), this protein is Protein AF-9.